Consider the following 277-residue polypeptide: SF-assemblin (277 aa).

A disordered region spans residues 1–20 (MATSGMVSPTSGRPFSPMRS). Residues 1-27 (MATSGMVSPTSGRPFSPMRSSVLTTTG) are nonhelical region. The tract at residues 28 to 277 (SAIKLEHVSE…KMVNMQHNSA (250 aa)) is rod. A coiled-coil region spans residues 70–90 (RLEKSMEAEVKRRAESDKQLQ).

The protein belongs to the SF-assemblin family. The N-terminus is blocked.

It is found in the cytoplasm. Its subcellular location is the cytoskeleton. Major component of the striated microtubule-associated fibers (SMAFs; system-I-fibers). The polypeptide is SF-assemblin (Dunaliella bioculata (Green alga)).